A 23-amino-acid polypeptide reads, in one-letter code: Laccase-1 (23 aa).

Belongs to the multicopper oxidase family. The cofactor is Cu cation.

The protein resides in the secreted. It catalyses the reaction 4 hydroquinone + O2 = 4 benzosemiquinone + 2 H2O. Its activity is regulated as follows. Strongly inhibited by sodium azide, sodium cyanide, Li(+), Sn(+), Hg(2+), and the disulfide-reducing agents beta-mercaptoethanol, dithiothreitol and thioglycolic acid. Moderately inhibited by Mn(2+) and Fe(2+), inhibition by these metal ions is stronger at 0.1 mM than at 1 mM. Moderately inhibited by Cu(2+). In terms of biological role, lignin degradation and detoxification of lignin-derived products. Demethylates eucalyptus hard wood lignin. Has high activity against the non-phenolic heterocyclic compound ABTS, and lower activity against the phenolic substrates syringic acid, caffeic acid, syringaldazine, vanillic acid, catechol and levodihydroxyphenylalanine. The chain is Laccase-1 from Galerina sp.